A 165-amino-acid chain; its full sequence is uncharacterized protein (165 aa).

Positions 53–123 are disordered; the sequence is CSEKTGSAPN…PAPSSGRQGG (71 aa). Over residues 58–71 the composition is skewed to low complexity; the sequence is GSAPNPGSSAPAPA.

This is an uncharacterized protein from Treponema pallidum (strain Nichols).